Here is a 250-residue protein sequence, read N- to C-terminus: Pyridoxine 5'-phosphate synthase (250 aa).

Positions 8 and 19 each coordinate 3-amino-2-oxopropyl phosphate. H44 functions as the Proton acceptor in the catalytic mechanism. Positions 46 and 51 each coordinate 1-deoxy-D-xylulose 5-phosphate. E76 serves as the catalytic Proton acceptor. Position 106 (T106) interacts with 1-deoxy-D-xylulose 5-phosphate. H200 (proton donor) is an active-site residue. 3-amino-2-oxopropyl phosphate contacts are provided by residues D201 and 223–224 (GH).

It belongs to the PNP synthase family. In terms of assembly, homooctamer; tetramer of dimers.

The protein resides in the cytoplasm. The catalysed reaction is 3-amino-2-oxopropyl phosphate + 1-deoxy-D-xylulose 5-phosphate = pyridoxine 5'-phosphate + phosphate + 2 H2O + H(+). Its pathway is cofactor biosynthesis; pyridoxine 5'-phosphate biosynthesis; pyridoxine 5'-phosphate from D-erythrose 4-phosphate: step 5/5. Catalyzes the complicated ring closure reaction between the two acyclic compounds 1-deoxy-D-xylulose-5-phosphate (DXP) and 3-amino-2-oxopropyl phosphate (1-amino-acetone-3-phosphate or AAP) to form pyridoxine 5'-phosphate (PNP) and inorganic phosphate. This Allorhizobium ampelinum (strain ATCC BAA-846 / DSM 112012 / S4) (Agrobacterium vitis (strain S4)) protein is Pyridoxine 5'-phosphate synthase.